The chain runs to 435 residues: Thiosulfate sulfurtransferase YnjE (435 aa).

A signal peptide spans 1–23 (MKRVSQMTALAMALGLACASSWA). 3 consecutive Rhodanese domains span residues 36-138 (QQQN…RLQK), 164-270 (PAGD…PVER), and 304-425 (HRQD…NPVA). Cysteine 385 acts as the Cysteine persulfide intermediate in catalysis. Arginine 390 serves as a coordination point for substrate.

In terms of assembly, monomer.

The protein localises to the periplasm. It catalyses the reaction thiosulfate + hydrogen cyanide = thiocyanate + sulfite + 2 H(+). In Escherichia coli (strain K12), this protein is Thiosulfate sulfurtransferase YnjE (ynjE).